The chain runs to 630 residues: Ubiquitin carboxyl-terminal hydrolase MINDY-2 (630 aa).

A disordered region spans residues 1 to 209 (MESGPESLQP…RVPEEEEGAA (209 aa)). Polar residues predominate over residues 24–33 (GSPQEGQQET). Residue Ser94 is modified to Phosphoserine. Low complexity-rich tracts occupy residues 141 to 163 (EESA…SCSD) and 170 to 191 (SPSL…SSEF). Cys267 (nucleophile) is an active-site residue. Catalysis depends on His449, which acts as the Proton acceptor. The ubiquitin-binding domain (UBD) stretch occupies residues 508–560 (GQQDQIDQDYLMALSLQQEQQSQEINWEQIPEGISDLELAKKLQEEEDRRASQ). A compositionally biased stretch (low complexity) spans 564-599 (EQEQAAAAAASASASASASASTQAPQSQPVQASPSS). The tract at residues 564 to 630 (EQEQAAAAAA…EKEKNSCVIL (67 aa)) is disordered. Basic and acidic residues predominate over residues 606-630 (SERKRKEPREKDKEKEKEKNSCVIL).

Belongs to the MINDY deubiquitinase family. FAM63 subfamily.

It carries out the reaction Thiol-dependent hydrolysis of ester, thioester, amide, peptide and isopeptide bonds formed by the C-terminal Gly of ubiquitin (a 76-residue protein attached to proteins as an intracellular targeting signal).. Hydrolase that can remove 'Lys-48'-linked conjugated ubiquitin from proteins. Can also bind to polyubiquitin chains of different linkage types, including 'Lys-6', 'Lys-11', 'Lys-29', 'Lys-33' and 'Lys-63'. May play a regulatory role at the level of protein turnover. This chain is Ubiquitin carboxyl-terminal hydrolase MINDY-2 (MINDY2), found in Bos taurus (Bovine).